The primary structure comprises 399 residues: MGSCSLQLPLINLADKTLEPGSSKWAEVRSDVRKALEDFGCFEASYDKVSLELQESIMKTMEELFALPVETKQRNVCPKPYVGYLNHNNLSESLGISNANILENINEFTQQLWPHGDGNENISKTIQLFAEKLVEIDVMVRRMVMESFGIEKYIDDHLKSTAYATDELNIVGVEPNVGVKVNADISDDVNANASVNAGVGANVNADTGVNDNLNVDANVAVGGGVNANTDLGVGVNVNSNVAVNAKTGGDDVEANDDNEEKKLGLPCHTDKNLFTVLFQHEIEGLEVKTKDEKWIRVKPSPNTFIVIAGDSLCALMNGRIRAPYHRVRVTEKKRTRYTAAIFTCPKPDYVIEAPKELVDEKHPRLFRPFDYRDLFTFYHSEAGRKIQYTLQAYCAVSEA.

A Fe2OG dioxygenase domain is found at 248–345 (GGDDVEANDD…RYTAAIFTCP (98 aa)). Fe cation contacts are provided by H268, D270, and H325. R336 serves as a coordination point for 2-oxoglutarate.

This sequence belongs to the iron/ascorbate-dependent oxidoreductase family. It depends on Fe(2+) as a cofactor.

This Arabidopsis thaliana (Mouse-ear cress) protein is Probable inactive 2-oxoglutarate-dependent dioxygenase AOP2 (AOP2).